Here is a 248-residue protein sequence, read N- to C-terminus: Leucyl/phenylalanyl-tRNA--protein transferase (248 aa).

The protein belongs to the L/F-transferase family.

It is found in the cytoplasm. The catalysed reaction is N-terminal L-lysyl-[protein] + L-leucyl-tRNA(Leu) = N-terminal L-leucyl-L-lysyl-[protein] + tRNA(Leu) + H(+). It carries out the reaction N-terminal L-arginyl-[protein] + L-leucyl-tRNA(Leu) = N-terminal L-leucyl-L-arginyl-[protein] + tRNA(Leu) + H(+). The enzyme catalyses L-phenylalanyl-tRNA(Phe) + an N-terminal L-alpha-aminoacyl-[protein] = an N-terminal L-phenylalanyl-L-alpha-aminoacyl-[protein] + tRNA(Phe). Functions in the N-end rule pathway of protein degradation where it conjugates Leu, Phe and, less efficiently, Met from aminoacyl-tRNAs to the N-termini of proteins containing an N-terminal arginine or lysine. This Rhizorhabdus wittichii (strain DSM 6014 / CCUG 31198 / JCM 15750 / NBRC 105917 / EY 4224 / RW1) (Sphingomonas wittichii) protein is Leucyl/phenylalanyl-tRNA--protein transferase.